A 284-amino-acid polypeptide reads, in one-letter code: Bifunctional protein FolD (284 aa).

Residues 166–168 and isoleucine 232 each bind NADP(+); that span reads GAS.

It belongs to the tetrahydrofolate dehydrogenase/cyclohydrolase family. In terms of assembly, homodimer.

The catalysed reaction is (6R)-5,10-methylene-5,6,7,8-tetrahydrofolate + NADP(+) = (6R)-5,10-methenyltetrahydrofolate + NADPH. It carries out the reaction (6R)-5,10-methenyltetrahydrofolate + H2O = (6R)-10-formyltetrahydrofolate + H(+). The protein operates within one-carbon metabolism; tetrahydrofolate interconversion. In terms of biological role, catalyzes the oxidation of 5,10-methylenetetrahydrofolate to 5,10-methenyltetrahydrofolate and then the hydrolysis of 5,10-methenyltetrahydrofolate to 10-formyltetrahydrofolate. This is Bifunctional protein FolD from Shewanella frigidimarina (strain NCIMB 400).